The primary structure comprises 769 residues: Amino-acid acetyltransferase, mitochondrial (769 aa).

The disordered stretch occupies residues 150–172 (LKASPAKSGQEPTESPKESISAS). Positions 159-172 (QEPTESPKESISAS) are enriched in polar residues. Positions 590–759 (MQPRLGLNDP…YEAVCRSIQP (170 aa)) constitute an N-acetyltransferase domain.

Belongs to the acetyltransferase family.

It is found in the mitochondrion. The catalysed reaction is L-glutamate + acetyl-CoA = N-acetyl-L-glutamate + CoA + H(+). The protein operates within amino-acid biosynthesis; L-arginine biosynthesis; N(2)-acetyl-L-ornithine from L-glutamate: step 1/4. Functionally, N-acetylglutamate synthase involved in arginine biosynthesis. This chain is Amino-acid acetyltransferase, mitochondrial (arg2), found in Penicillium rubens (strain ATCC 28089 / DSM 1075 / NRRL 1951 / Wisconsin 54-1255) (Penicillium chrysogenum).